Here is a 377-residue protein sequence, read N- to C-terminus: 1-deoxy-D-xylulose 5-phosphate reductoisomerase (377 aa).

NADPH contacts are provided by Thr-20, Gly-21, Ile-23, Asn-46, and Asn-115. Position 116 (Lys-116) interacts with 1-deoxy-D-xylulose 5-phosphate. Position 117 (Glu-117) interacts with NADPH. Asp-141 is a Mn(2+) binding site. 1-deoxy-D-xylulose 5-phosphate-binding residues include Ser-142, Glu-143, Ser-166, and His-189. Residue Glu-143 participates in Mn(2+) binding. Gly-195 serves as a coordination point for NADPH. Residues Ser-202, Asn-207, Lys-208, and Glu-211 each coordinate 1-deoxy-D-xylulose 5-phosphate. Residue Glu-211 coordinates Mn(2+).

This sequence belongs to the DXR family. Mg(2+) serves as cofactor. Mn(2+) is required as a cofactor.

The catalysed reaction is 2-C-methyl-D-erythritol 4-phosphate + NADP(+) = 1-deoxy-D-xylulose 5-phosphate + NADPH + H(+). It participates in isoprenoid biosynthesis; isopentenyl diphosphate biosynthesis via DXP pathway; isopentenyl diphosphate from 1-deoxy-D-xylulose 5-phosphate: step 1/6. Functionally, catalyzes the NADPH-dependent rearrangement and reduction of 1-deoxy-D-xylulose-5-phosphate (DXP) to 2-C-methyl-D-erythritol 4-phosphate (MEP). This Malacoplasma penetrans (strain HF-2) (Mycoplasma penetrans) protein is 1-deoxy-D-xylulose 5-phosphate reductoisomerase.